A 336-amino-acid polypeptide reads, in one-letter code: UDP-N-acetylmuramoylpentapeptide-lysine N(6)-alanyltransferase (336 aa).

Residues 37 to 40 (KNNW), Y104, R212, Y216, and Y257 each bind substrate.

This sequence belongs to the FemABX family.

The catalysed reaction is UDP-N-acetyl-alpha-D-muramoyl-L-alanyl-gamma-D-glutamyl-L-lysyl-D-alanyl-D-alanine + L-alanyl-tRNA(Ala) = UDP-N-acetyl-alpha-D-muramoyl-L-alanyl-gamma-D-glutamyl-N(6)-(L-alanyl)-L-lysyl-D-alanyl-D-alanine + tRNA(Ala) + H(+). Functionally, involved in the synthesis of the bacterial cell wall. Catalyzes the addition of alanine into the interchain peptide bridge of peptidoglycan precursor using aminoacyl-tRNA(Ala) as amino acid donor. This alanine is added to the epsilon-amino group of the L-lysine of the peptidoglycan UDP-N-acetyl-alpha-D-muramoyl-L-alanyl-D-glutamyl-L-lysyl-D-alanyl-D-alanine, in a ribosome-independent mechanism. Specific for UDP-N-acetyl-muramoyl-pentapeptide. Has no activity toward UDP-N-acetyl-muramoyl-tetrapeptide or UDP-N-acetyl-muramoyl-tripeptide. Also acts on L-seryl-tRNA(Ser). The protein is UDP-N-acetylmuramoylpentapeptide-lysine N(6)-alanyltransferase of Weissella viridescens (Lactobacillus viridescens).